We begin with the raw amino-acid sequence, 301 residues long: Probable alpha-L-glutamate ligase 2 (301 aa).

The region spanning 104–287 is the ATP-grasp domain; the sequence is LQLLSRKGIG…VAEPIVEYIE (184 aa). Residues lysine 141, 178 to 179, aspartate 187, and 211 to 213 contribute to the ATP site; these read EY and RSN. 3 residues coordinate Mg(2+): aspartate 248, glutamate 260, and asparagine 262. The Mn(2+) site is built by aspartate 248, glutamate 260, and asparagine 262.

Belongs to the RimK family. It depends on Mg(2+) as a cofactor. Mn(2+) is required as a cofactor.

The chain is Probable alpha-L-glutamate ligase 2 from Shewanella amazonensis (strain ATCC BAA-1098 / SB2B).